The following is a 210-amino-acid chain: Chaperone protein TorD (210 aa).

It belongs to the TorD/DmsD family. TorD subfamily.

The protein resides in the cytoplasm. In terms of biological role, involved in the biogenesis of TorA. Acts on TorA before the insertion of the molybdenum cofactor and, as a result, probably favors a conformation of the apoenzyme that is competent for acquiring the cofactor. The polypeptide is Chaperone protein TorD (Salmonella arizonae (strain ATCC BAA-731 / CDC346-86 / RSK2980)).